Here is a 417-residue protein sequence, read N- to C-terminus: MSLFEELKWRNLITECSDEKRAKLLLDGNKKIKFYCGFDATAGSLTVGHLVQIITFLLIQKKGHFPIVLLGGATSFIGDPKKIEERKLLDPSQILDNFNKISLQFKKILSFISFEIVNNYDWISKIDVINFLRKYGKLFNINYMLSKEVIANRLKKGLSYAEFSYMVLQSLDFQYLFEHKNVIMQFGGSDQWGNITSGLELIRKINKIKDNDKPVGMTNALLLKSDGTKFGKSEDGVLWLDQKLTSPYKIYQYFLNTEDKEVVNYLKSLTLLSKKEIINLKEENIVNPQKRLAQKILAKEIITLIHGKKIFENCFNTNQALFVGKKDQLSEQSFYFLKYTLNYIEVNDKISLLEALVFTKLTNSKNKAKELISNHAIKIFDQIVDDTELILNIKHSLFNKYILLKKGKRFNALIIFK.

An L-tyrosine-binding site is contributed by Tyr35. The 'HIGH' region signature appears at 40–49 (ATAGSLTVGH). L-tyrosine is bound by residues Tyr165 and Gln169. The 'KMSKS' region signature appears at 229-233 (KFGKS). Residue Lys232 coordinates ATP. The region spanning 350 to 416 (ISLLEALVFT…GKRFNALIIF (67 aa)) is the S4 RNA-binding domain.

Belongs to the class-I aminoacyl-tRNA synthetase family. TyrS type 1 subfamily. As to quaternary structure, homodimer.

The protein resides in the cytoplasm. It catalyses the reaction tRNA(Tyr) + L-tyrosine + ATP = L-tyrosyl-tRNA(Tyr) + AMP + diphosphate + H(+). In terms of biological role, catalyzes the attachment of tyrosine to tRNA(Tyr) in a two-step reaction: tyrosine is first activated by ATP to form Tyr-AMP and then transferred to the acceptor end of tRNA(Tyr). This Phytoplasma mali (strain AT) protein is Tyrosine--tRNA ligase.